We begin with the raw amino-acid sequence, 482 residues long: Altronate oxidoreductase (482 aa).

18–29 (IIQFGEGNFLRA) is a binding site for NAD(+).

It belongs to the mannitol dehydrogenase family. UxaB subfamily.

The enzyme catalyses D-altronate + NAD(+) = keto-D-tagaturonate + NADH + H(+). It functions in the pathway carbohydrate metabolism; pentose and glucuronate interconversion. This chain is Altronate oxidoreductase, found in Shigella sonnei (strain Ss046).